The sequence spans 383 residues: 8-amino-7-oxononanoate synthase (383 aa).

R21 lines the substrate pocket. Residue 108–109 participates in pyridoxal 5'-phosphate binding; it reads GY. H133 lines the substrate pocket. Pyridoxal 5'-phosphate is bound by residues S179, H207, and T233. An N6-(pyridoxal phosphate)lysine modification is found at K236. T350 lines the substrate pocket.

The protein belongs to the class-II pyridoxal-phosphate-dependent aminotransferase family. BioF subfamily. Homodimer. Pyridoxal 5'-phosphate is required as a cofactor.

It carries out the reaction 6-carboxyhexanoyl-[ACP] + L-alanine + H(+) = (8S)-8-amino-7-oxononanoate + holo-[ACP] + CO2. The protein operates within cofactor biosynthesis; biotin biosynthesis. In terms of biological role, catalyzes the decarboxylative condensation of pimeloyl-[acyl-carrier protein] and L-alanine to produce 8-amino-7-oxononanoate (AON), [acyl-carrier protein], and carbon dioxide. The polypeptide is 8-amino-7-oxononanoate synthase (Yersinia pseudotuberculosis serotype O:1b (strain IP 31758)).